The sequence spans 217 residues: Small ribosomal subunit protein uS3 (217 aa).

Residues 38–106 (IRQLIQTKLA…QVHINIVEIK (69 aa)) enclose the KH type-2 domain.

This sequence belongs to the universal ribosomal protein uS3 family. In terms of assembly, part of the 30S ribosomal subunit. Forms a tight complex with proteins S10 and S14.

Binds the lower part of the 30S subunit head. Binds mRNA in the 70S ribosome, positioning it for translation. The sequence is that of Small ribosomal subunit protein uS3 from Lactococcus lactis subsp. cremoris (strain MG1363).